Consider the following 301-residue polypeptide: Homoserine O-acetyltransferase (301 aa).

The active-site Acyl-thioester intermediate is C142. Residues K163 and S192 each contribute to the substrate site. H235 functions as the Proton acceptor in the catalytic mechanism. E237 is a catalytic residue. Position 249 (R249) interacts with substrate.

Belongs to the MetA family.

It is found in the cytoplasm. It carries out the reaction L-homoserine + acetyl-CoA = O-acetyl-L-homoserine + CoA. It participates in amino-acid biosynthesis; L-methionine biosynthesis via de novo pathway; O-acetyl-L-homoserine from L-homoserine: step 1/1. Functionally, transfers an acetyl group from acetyl-CoA to L-homoserine, forming acetyl-L-homoserine. The polypeptide is Homoserine O-acetyltransferase (Lachnoclostridium phytofermentans (strain ATCC 700394 / DSM 18823 / ISDg) (Clostridium phytofermentans)).